Reading from the N-terminus, the 209-residue chain is Pyroglutamyl-peptidase 1 (209 aa).

Catalysis depends on residues Glu-85, Cys-149, and His-168.

It belongs to the peptidase C15 family. In terms of assembly, monomer.

It is found in the cytoplasm. It carries out the reaction Release of an N-terminal pyroglutamyl group from a polypeptide, the second amino acid generally not being Pro.. With respect to regulation, inhibited by transition metal ions including Ni(2+), Zn(2+), and Cu(2+) and by sulfhydryl-blocking agents. Removes 5-oxoproline from various penultimate amino acid residues except L-proline. The chain is Pyroglutamyl-peptidase 1 (PGPEP1) from Homo sapiens (Human).